A 337-amino-acid chain; its full sequence is 1-aminocyclopropane-1-carboxylate deaminase (337 aa).

An N6-(pyridoxal phosphate)lysine modification is found at lysine 50. Serine 77 (nucleophile) is an active-site residue.

Belongs to the ACC deaminase/D-cysteine desulfhydrase family. As to quaternary structure, homotrimer. Pyridoxal 5'-phosphate is required as a cofactor.

The catalysed reaction is 1-aminocyclopropane-1-carboxylate + H2O = 2-oxobutanoate + NH4(+). Catalyzes a cyclopropane ring-opening reaction, the irreversible conversion of 1-aminocyclopropane-1-carboxylate (ACC) to ammonia and alpha-ketobutyrate. Allows growth on ACC as a nitrogen source. The protein is 1-aminocyclopropane-1-carboxylate deaminase of Allorhizobium ampelinum (strain ATCC BAA-846 / DSM 112012 / S4) (Agrobacterium vitis (strain S4)).